The sequence spans 127 residues: Small ribosomal subunit protein uS12 (127 aa).

The segment at 1-28 (MPTIQQLIRDERSKAKRKTKSPALKQCP) is disordered. At D89 the chain carries 3-methylthioaspartic acid. The interval 104-127 (ATGVKNRQKARSKYGTKRPKPAAK) is disordered. Over residues 109-127 (NRQKARSKYGTKRPKPAAK) the composition is skewed to basic residues.

This sequence belongs to the universal ribosomal protein uS12 family. In terms of assembly, part of the 30S ribosomal subunit. Contacts proteins S8 and S17. May interact with IF1 in the 30S initiation complex.

Functionally, with S4 and S5 plays an important role in translational accuracy. In terms of biological role, interacts with and stabilizes bases of the 16S rRNA that are involved in tRNA selection in the A site and with the mRNA backbone. Located at the interface of the 30S and 50S subunits, it traverses the body of the 30S subunit contacting proteins on the other side and probably holding the rRNA structure together. The combined cluster of proteins S8, S12 and S17 appears to hold together the shoulder and platform of the 30S subunit. The sequence is that of Small ribosomal subunit protein uS12 from Microcystis aeruginosa (strain NIES-843 / IAM M-2473).